The following is a 452-amino-acid chain: Bifunctional protein GlmU (452 aa).

The tract at residues 1 to 224 is pyrophosphorylase; that stretch reads MNIVILAAGM…VWETHGVNSK (224 aa). Residues 6–9, K20, Q71, 76–77, 98–100, G135, E149, N164, and N222 contribute to the UDP-N-acetyl-alpha-D-glucosamine site; these read LAAG, GT, and YGD. D100 serves as a coordination point for Mg(2+). N222 is a Mg(2+) binding site. The linker stretch occupies residues 225 to 245; that stretch reads VQLAELERVHQNNIARALLEH. An N-acetyltransferase region spans residues 246–452; that stretch reads GVTLADPARI…GWQRPVKIKK (207 aa). UDP-N-acetyl-alpha-D-glucosamine contacts are provided by R328 and K346. H358 acts as the Proton acceptor in catalysis. UDP-N-acetyl-alpha-D-glucosamine contacts are provided by Y361 and N372. Acetyl-CoA contacts are provided by residues A375, 381-382, S400, A418, and R435; that span reads NY.

In the N-terminal section; belongs to the N-acetylglucosamine-1-phosphate uridyltransferase family. The protein in the C-terminal section; belongs to the transferase hexapeptide repeat family. As to quaternary structure, homotrimer. Mg(2+) is required as a cofactor.

It localises to the cytoplasm. The enzyme catalyses alpha-D-glucosamine 1-phosphate + acetyl-CoA = N-acetyl-alpha-D-glucosamine 1-phosphate + CoA + H(+). It catalyses the reaction N-acetyl-alpha-D-glucosamine 1-phosphate + UTP + H(+) = UDP-N-acetyl-alpha-D-glucosamine + diphosphate. The protein operates within nucleotide-sugar biosynthesis; UDP-N-acetyl-alpha-D-glucosamine biosynthesis; N-acetyl-alpha-D-glucosamine 1-phosphate from alpha-D-glucosamine 6-phosphate (route II): step 2/2. Its pathway is nucleotide-sugar biosynthesis; UDP-N-acetyl-alpha-D-glucosamine biosynthesis; UDP-N-acetyl-alpha-D-glucosamine from N-acetyl-alpha-D-glucosamine 1-phosphate: step 1/1. It functions in the pathway bacterial outer membrane biogenesis; LPS lipid A biosynthesis. In terms of biological role, catalyzes the last two sequential reactions in the de novo biosynthetic pathway for UDP-N-acetylglucosamine (UDP-GlcNAc). The C-terminal domain catalyzes the transfer of acetyl group from acetyl coenzyme A to glucosamine-1-phosphate (GlcN-1-P) to produce N-acetylglucosamine-1-phosphate (GlcNAc-1-P), which is converted into UDP-GlcNAc by the transfer of uridine 5-monophosphate (from uridine 5-triphosphate), a reaction catalyzed by the N-terminal domain. In Herminiimonas arsenicoxydans, this protein is Bifunctional protein GlmU.